We begin with the raw amino-acid sequence, 423 residues long: UDP-N-acetylglucosamine 1-carboxyvinyltransferase (423 aa).

A phosphoenolpyruvate-binding site is contributed by 22-23 (KN). Residue R93 coordinates UDP-N-acetyl-alpha-D-glucosamine. C117 functions as the Proton donor in the catalytic mechanism. C117 bears the 2-(S-cysteinyl)pyruvic acid O-phosphothioketal mark. Residues 122-126 (RPVDL), D308, and V330 each bind UDP-N-acetyl-alpha-D-glucosamine.

The protein belongs to the EPSP synthase family. MurA subfamily.

The protein localises to the cytoplasm. The enzyme catalyses phosphoenolpyruvate + UDP-N-acetyl-alpha-D-glucosamine = UDP-N-acetyl-3-O-(1-carboxyvinyl)-alpha-D-glucosamine + phosphate. The protein operates within cell wall biogenesis; peptidoglycan biosynthesis. Its function is as follows. Cell wall formation. Adds enolpyruvyl to UDP-N-acetylglucosamine. This is UDP-N-acetylglucosamine 1-carboxyvinyltransferase from Finegoldia magna (strain ATCC 29328 / DSM 20472 / WAL 2508) (Peptostreptococcus magnus).